Here is a 157-residue protein sequence, read N- to C-terminus: D-aminoacyl-tRNA deacylase (157 aa).

Residues 137-138 (GP) carry the Gly-cisPro motif, important for rejection of L-amino acids motif.

Belongs to the DTD family. Homodimer.

Its subcellular location is the cytoplasm. The enzyme catalyses glycyl-tRNA(Ala) + H2O = tRNA(Ala) + glycine + H(+). It catalyses the reaction a D-aminoacyl-tRNA + H2O = a tRNA + a D-alpha-amino acid + H(+). Functionally, an aminoacyl-tRNA editing enzyme that deacylates mischarged D-aminoacyl-tRNAs. Also deacylates mischarged glycyl-tRNA(Ala), protecting cells against glycine mischarging by AlaRS. Acts via tRNA-based rather than protein-based catalysis; rejects L-amino acids rather than detecting D-amino acids in the active site. By recycling D-aminoacyl-tRNA to D-amino acids and free tRNA molecules, this enzyme counteracts the toxicity associated with the formation of D-aminoacyl-tRNA entities in vivo and helps enforce protein L-homochirality. The sequence is that of D-aminoacyl-tRNA deacylase from Roseiflexus castenholzii (strain DSM 13941 / HLO8).